Reading from the N-terminus, the 589-residue chain is Protein kinase G11A (589 aa).

The tract at residues 1-167 (MASKAMPRAP…SACSSISSVT (167 aa)) is disordered. Composition is skewed to polar residues over residues 15–36 (NLQS…SPSK) and 63–76 (TQHQ…TGSN). Residues 91 to 100 (RLADEEKGVV) are compositionally biased toward basic and acidic residues. Residues 142–165 (SSSRCRPSTSSDVSDESACSSISS) show a composition bias toward low complexity. A Protein kinase domain is found at 195-533 (FKLLKKLGCG…ATEIKQHPFF (339 aa)). ATP is bound by residues 201-209 (LGCGDIGSV) and Lys224. Asp320 functions as the Proton acceptor in the catalytic mechanism. Positions 551-589 (RPVEIERPPKQPVSTSEPAAAPSDAAQKSSDSYLEFDFF) are disordered.

This sequence belongs to the protein kinase superfamily. Ser/Thr protein kinase family.

The enzyme catalyses L-seryl-[protein] + ATP = O-phospho-L-seryl-[protein] + ADP + H(+). It catalyses the reaction L-threonyl-[protein] + ATP = O-phospho-L-threonyl-[protein] + ADP + H(+). May play a role in the regulation of metabolism and signal transduction processes. This Oryza sativa subsp. japonica (Rice) protein is Protein kinase G11A.